We begin with the raw amino-acid sequence, 1059 residues long: Protein cappuccino (1059 aa).

2 stretches are compositionally biased toward polar residues: residues 62–80 (AAVT…NESG) and 90–123 (ATTS…SAAS). 2 disordered regions span residues 62 to 146 (AAVT…GTPT) and 448 to 647 (QTES…TAPP). The segment covering 133–142 (LPLPPPPPGF) has biased composition (pro residues). Residues 468 to 481 (SDNESAKEDGEKPH) are compositionally biased toward basic and acidic residues. An FH1 domain is found at 480-560 (PHAVAPPPPP…PPPPMSASPS (81 aa)). The span at 483-541 (VAPPPPPPPPPLHAFVAPPPPPPPPPPPPPPLANYGAPPPPPPPPPGSGSAPPPPPPAP) shows a compositional bias: pro residues. Residues 585–1032 (RKSAVNPPKP…KKSKQAQIES (448 aa)) enclose the FH2 domain. The segment covering 620–629 (TDSTENSGSS) has biased composition (polar residues). Positions 1049–1059 (KERMLMRRSKN) are important for interaction with spir.

This sequence belongs to the formin homology family. Cappuccino subfamily. As to quaternary structure, interacts with wash. Interacts with spir.

It is found in the cytoplasm. It localises to the cytoskeleton. Its subcellular location is the cytosol. The protein resides in the membrane. The protein localises to the cytoplasmic vesicle membrane. Functionally, acts as an actin nucleation factor and promotes assembly of actin filaments together with spir. May play a role in intracellular vesicle transport along actin fibers, providing a novel link between actin cytoskeleton dynamics and intracellular transport. The sequence is that of Protein cappuccino (capu) from Drosophila melanogaster (Fruit fly).